The sequence spans 122 residues: Large ribosomal subunit protein uL14 (122 aa).

The protein belongs to the universal ribosomal protein uL14 family. As to quaternary structure, part of the 50S ribosomal subunit. Forms a cluster with proteins L3 and L19. In the 70S ribosome, L14 and L19 interact and together make contacts with the 16S rRNA in bridges B5 and B8.

Its function is as follows. Binds to 23S rRNA. Forms part of two intersubunit bridges in the 70S ribosome. This chain is Large ribosomal subunit protein uL14, found in Thiobacillus denitrificans (strain ATCC 25259 / T1).